Consider the following 399-residue polypeptide: S-adenosylmethionine synthase (399 aa).

H15 contacts ATP. D17 is a binding site for Mg(2+). E43 contributes to the K(+) binding site. L-methionine-binding residues include E56 and Q99. Positions Q99–H109 are flexible loop. ATP-binding positions include D175 to K177, R242 to F243, D251, R257 to K258, A274, and K278. D251 is an L-methionine binding site. K282 contacts L-methionine.

This sequence belongs to the AdoMet synthase family. Homotetramer; dimer of dimers. Mg(2+) serves as cofactor. It depends on K(+) as a cofactor.

The protein localises to the cytoplasm. It catalyses the reaction L-methionine + ATP + H2O = S-adenosyl-L-methionine + phosphate + diphosphate. Its pathway is amino-acid biosynthesis; S-adenosyl-L-methionine biosynthesis; S-adenosyl-L-methionine from L-methionine: step 1/1. Its function is as follows. Catalyzes the formation of S-adenosylmethionine (AdoMet) from methionine and ATP. The overall synthetic reaction is composed of two sequential steps, AdoMet formation and the subsequent tripolyphosphate hydrolysis which occurs prior to release of AdoMet from the enzyme. This is S-adenosylmethionine synthase from Lactobacillus acidophilus (strain ATCC 700396 / NCK56 / N2 / NCFM).